Reading from the N-terminus, the 564-residue chain is Ubiquitin carboxyl-terminal hydrolase 39 (564 aa).

The disordered stretch occupies residues 1–96; sequence MSSRSKRQSH…VRAKNGRVDS (96 aa). Residues 28 to 39 show a composition bias toward basic and acidic residues; the sequence is IKKERDREKEPE. A Phosphoserine modification is found at Ser46. Lys51 is covalently cross-linked (Glycyl lysine isopeptide (Lys-Gly) (interchain with G-Cter in SUMO2)). Residues 59 to 69 show a composition bias toward low complexity; that stretch reads REVPAPALPVV. Position 81 is a phosphoserine (Ser81). Residues 84–96 are compositionally biased toward basic and acidic residues; the sequence is EREVRAKNGRVDS. Residues 102-199 form a UBP-type; degenerate zinc finger; it reads RHCPYLDTIN…YVLKPTFTKQ (98 aa). Positions 135, 138, 154, and 160 each coordinate Zn(2+). One can recognise a USP domain in the interval 224–554; sequence VGLNNIKAND…EAYIQIWKRR (331 aa).

Belongs to the peptidase C19 family. As to quaternary structure, the U4/U6-U5 tri-snRNP complex is a building block of the precatalytic spliceosome (spliceosome B complex). Component of the U4/U6-U5 tri-snRNP complex composed of the U4, U6 and U5 snRNAs and at least PRPF3, PRPF4, PRPF6, PRPF8, PRPF31, SNRNP200, TXNL4A, SNRNP40, SNRPB, SNRPD1, SNRPD2, SNRPD3, SNRPE, SNRPF, SNRPG, DDX23, CD2BP2, PPIH, SNU13, EFTUD2, SART1 and USP39, plus LSM2, LSM3, LSM4, LSM5, LSM6, LSM7 and LSM8.

The protein localises to the nucleus. The enzyme catalyses Thiol-dependent hydrolysis of ester, thioester, amide, peptide and isopeptide bonds formed by the C-terminal Gly of ubiquitin (a 76-residue protein attached to proteins as an intracellular targeting signal).. Deubiquitinating enzyme that plays a role in many cellular processes including cellular antiviral response, epithelial morphogenesis, DNA repair or B-cell development. Plays a role in pre-mRNA splicing as a component of the U4/U6-U5 tri-snRNP, one of the building blocks of the precatalytic spliceosome. Specifically regulates immunoglobulin gene rearrangement in a spliceosome-dependent manner, which involves modulating chromatin interactions at the Igh locus and therefore plays an essential role in B-cell development. Regulates AURKB mRNA levels, and thereby plays a role in cytokinesis and in the spindle checkpoint. Regulates apoptosis and G2/M cell cycle checkpoint in response to DNA damage by deubiquitinating and stabilizing CHK2. Also plays an important role in DNA repair by controlling the recruitment of XRCC4/LIG4 to DNA double-strand breaks for non-homologous end-joining repair. Participates in antiviral activity by affecting the type I IFN signaling by stabilizing STAT1 and decreasing its 'Lys-6'-linked ubiquitination. Contributes to non-canonical Wnt signaling during epidermal differentiation. Acts as a negative regulator NF-kappa-B activation through deubiquitination of 'Lys-48'-linked ubiquitination of NFKBIA. This is Ubiquitin carboxyl-terminal hydrolase 39 from Mus musculus (Mouse).